The sequence spans 377 residues: tRNA-specific 2-thiouridylase MnmA (377 aa).

Residues 18–25 (AMSGGVDS) and Met-44 contribute to the ATP site. Residue Cys-113 is the Nucleophile of the active site. The cysteines at positions 113 and 210 are disulfide-linked. ATP is bound at residue Gly-137. The segment at 159–161 (RDQ) is interaction with tRNA. The Cysteine persulfide intermediate role is filled by Cys-210.

The protein belongs to the MnmA/TRMU family.

It localises to the cytoplasm. The catalysed reaction is S-sulfanyl-L-cysteinyl-[protein] + uridine(34) in tRNA + AH2 + ATP = 2-thiouridine(34) in tRNA + L-cysteinyl-[protein] + A + AMP + diphosphate + H(+). Its function is as follows. Catalyzes the 2-thiolation of uridine at the wobble position (U34) of tRNA, leading to the formation of s(2)U34. In Rhodospirillum rubrum (strain ATCC 11170 / ATH 1.1.1 / DSM 467 / LMG 4362 / NCIMB 8255 / S1), this protein is tRNA-specific 2-thiouridylase MnmA.